The primary structure comprises 184 residues: Ribosome-recycling factor (184 aa).

This sequence belongs to the RRF family.

The protein localises to the cytoplasm. Responsible for the release of ribosomes from messenger RNA at the termination of protein biosynthesis. May increase the efficiency of translation by recycling ribosomes from one round of translation to another. This chain is Ribosome-recycling factor, found in Staphylococcus carnosus (strain TM300).